We begin with the raw amino-acid sequence, 396 residues long: uncharacterized protein (396 aa).

It belongs to the NAD(P)-dependent epimerase/dehydratase family. NAD(+) is required as a cofactor. The cofactor is NADP(+).

Putative nucleotide sugar epimerase/dehydrogenase. This is an uncharacterized protein from Sinorhizobium fredii (strain NBRC 101917 / NGR234).